Consider the following 78-residue polypeptide: Large ribosomal subunit protein bL28 (78 aa).

The segment at 1 to 24 (MSKVCQVTGKRPASGNNVSHAHNK) is disordered.

The protein belongs to the bacterial ribosomal protein bL28 family.

The polypeptide is Large ribosomal subunit protein bL28 (Nitrosococcus oceani (strain ATCC 19707 / BCRC 17464 / JCM 30415 / NCIMB 11848 / C-107)).